A 450-amino-acid polypeptide reads, in one-letter code: Phosphoglucosamine mutase 2 (450 aa).

Ser101 functions as the Phosphoserine intermediate in the catalytic mechanism. Mg(2+)-binding residues include Ser101, Asp245, Asp247, and Asp249. Ser101 is modified (phosphoserine).

Belongs to the phosphohexose mutase family. Mg(2+) serves as cofactor. In terms of processing, activated by phosphorylation.

It carries out the reaction alpha-D-glucosamine 1-phosphate = D-glucosamine 6-phosphate. Catalyzes the conversion of glucosamine-6-phosphate to glucosamine-1-phosphate. The protein is Phosphoglucosamine mutase 2 of Shewanella baltica (strain OS185).